Consider the following 240-residue polypeptide: Probable 2-phosphosulfolactate phosphatase (240 aa).

Belongs to the ComB family. It depends on Mg(2+) as a cofactor.

It catalyses the reaction (2R)-O-phospho-3-sulfolactate + H2O = (2R)-3-sulfolactate + phosphate. This is Probable 2-phosphosulfolactate phosphatase from Clostridium kluyveri (strain NBRC 12016).